Reading from the N-terminus, the 90-residue chain is DNA-binding protein HU-beta (90 aa).

This sequence belongs to the bacterial histone-like protein family. In terms of assembly, heterodimer of an alpha and a beta chain.

In terms of biological role, histone-like DNA-binding protein which is capable of wrapping DNA to stabilize it, and thus to prevent its denaturation under extreme environmental conditions. The chain is DNA-binding protein HU-beta (hupB) from Salmonella typhi.